The chain runs to 252 residues: Demethylmenaquinone methyltransferase (252 aa).

S-adenosyl-L-methionine-binding positions include threonine 64, aspartate 85, and asparagine 112 to alanine 113.

This sequence belongs to the class I-like SAM-binding methyltransferase superfamily. MenG/UbiE family.

It carries out the reaction a 2-demethylmenaquinol + S-adenosyl-L-methionine = a menaquinol + S-adenosyl-L-homocysteine + H(+). It participates in quinol/quinone metabolism; menaquinone biosynthesis; menaquinol from 1,4-dihydroxy-2-naphthoate: step 2/2. In terms of biological role, methyltransferase required for the conversion of demethylmenaquinol (DMKH2) to menaquinol (MKH2). The polypeptide is Demethylmenaquinone methyltransferase (Lactococcus lactis subsp. lactis (strain IL1403) (Streptococcus lactis)).